Consider the following 137-residue polypeptide: uncharacterized protein (137 aa).

4 consecutive transmembrane segments (helical) span residues 14–34, 48–68, 84–104, and 109–129; these read AVVV…GSIS, YHII…SLSI, FFTI…LGLT, and HIPS…LNLF.

It localises to the cell membrane. This is an uncharacterized protein from Methanocaldococcus jannaschii (strain ATCC 43067 / DSM 2661 / JAL-1 / JCM 10045 / NBRC 100440) (Methanococcus jannaschii).